Consider the following 326-residue polypeptide: DNA-directed RNA polymerase subunit alpha (326 aa).

An alpha N-terminal domain (alpha-NTD) region spans residues 1–232; it reads MQGSARDFLK…EQLSSFVELE (232 aa). Positions 246–326 are alpha C-terminal domain (alpha-CTD); sequence FDPQLLAAVD…NWPPVDLMSE (81 aa).

It belongs to the RNA polymerase alpha chain family. As to quaternary structure, homodimer. The RNAP catalytic core consists of 2 alpha, 1 beta, 1 beta' and 1 omega subunit. When a sigma factor is associated with the core the holoenzyme is formed, which can initiate transcription.

The enzyme catalyses RNA(n) + a ribonucleoside 5'-triphosphate = RNA(n+1) + diphosphate. DNA-dependent RNA polymerase catalyzes the transcription of DNA into RNA using the four ribonucleoside triphosphates as substrates. The protein is DNA-directed RNA polymerase subunit alpha of Vesicomyosocius okutanii subsp. Calyptogena okutanii (strain HA).